The sequence spans 451 residues: UPF0210 protein Cbei_2352 (451 aa).

Belongs to the UPF0210 family. Homodimer.

This Clostridium beijerinckii (strain ATCC 51743 / NCIMB 8052) (Clostridium acetobutylicum) protein is UPF0210 protein Cbei_2352.